A 151-amino-acid polypeptide reads, in one-letter code: Myosin light polypeptide 6 (151 aa).

N-acetylcysteine is present on cysteine 2. The EF-hand 1 domain occupies aspartate 7–asparagine 42. Position 57 is a phosphoserine (serine 57). At lysine 81 the chain carries N6-acetyllysine. 2 consecutive EF-hand domains span residues glycine 84–lysine 119 and lysine 119–glycine 151.

As to quaternary structure, myosin is a hexamer of 2 heavy chains and 4 light chains. Interacts with SPATA6.

Regulatory light chain of myosin. Does not bind calcium. This is Myosin light polypeptide 6 (Myl6) from Rattus norvegicus (Rat).